We begin with the raw amino-acid sequence, 308 residues long: Tetraacyldisaccharide 4'-kinase (308 aa).

63-70 provides a ligand contact to ATP; the sequence is SFGGNGKT.

The protein belongs to the LpxK family.

It catalyses the reaction a lipid A disaccharide + ATP = a lipid IVA + ADP + H(+). Its pathway is glycolipid biosynthesis; lipid IV(A) biosynthesis; lipid IV(A) from (3R)-3-hydroxytetradecanoyl-[acyl-carrier-protein] and UDP-N-acetyl-alpha-D-glucosamine: step 6/6. Its function is as follows. Transfers the gamma-phosphate of ATP to the 4'-position of a tetraacyldisaccharide 1-phosphate intermediate (termed DS-1-P) to form tetraacyldisaccharide 1,4'-bis-phosphate (lipid IVA). This Campylobacter jejuni subsp. jejuni serotype O:2 (strain ATCC 700819 / NCTC 11168) protein is Tetraacyldisaccharide 4'-kinase.